Reading from the N-terminus, the 431-residue chain is MSTSSSALSQLKNSPLAGNINYEPTVWSRADALKVNENDPTTTQPLVSADFPVMSDTVFIWDTMPLRELDGTVVSVNGWSVILTLTADRHPDDPQYLDANGRYDIKRDWEDRHGRARMCYWYSRTGKDWIFGGRVMAEGVSPTTREWAGTPILLNDKGDIDLYYTCVTPGAAIAKVRGRIVTSDQGVELKDFTQVKKLFEADGTYYQTEAQNSSWNFRDPSPFIDPNDGKLYMVFEGNVAGERGSHTVGAAELGPVPPGHEDVGGARFQVGCIGLAVAKDLSGEEWEILPPLVTAVGVNDQTERPHYIFQDGKYYLFTISHKFTYAEGLEGPDGVYGFVGEHLFGPYRPMNASGLVLGNPPEQPFQTYSHCVMPNGLVTSFIDSVPTDGEDYRIGGTEAPTVRIVLKGDRSFVQEEYDYGYIPAMKDVQLS.

Residues tryptophan 61, aspartate 62, alanine 148, arginine 218, and aspartate 219 each coordinate sucrose. Aspartate 62 functions as the Nucleophile in the catalytic mechanism. Glutamate 303 acts as the Proton donor/acceptor in catalysis.

The protein belongs to the glycosyl hydrolase 68 family. In terms of assembly, homodimer.

It catalyses the reaction [6)-beta-D-fructofuranosyl-(2-&gt;](n) alpha-D-glucopyranoside + sucrose = [6)-beta-D-fructofuranosyl-(2-&gt;](n+1) alpha-D-glucopyranoside + D-glucose. Sucrose hydrolase activity is negatively affected by salt concentration. The levan polymerization rate is constant regardless of sucrose concentration. In terms of biological role, catalyzes the synthesis of levan, a fructose polymer, by transferring the fructosyl moiety from sucrose to a growing acceptor molecule. Also displays sucrose hydrolase activity. The protein is Levansucrase Lscbeta of Pseudomonas syringae pv. actinidiae.